The sequence spans 668 residues: MGKVLVTTALAYTNGPLHIGHVRSTYLPADVYTRFLKMRGIDAIHIGGTDNHGVPIALQAELEGKDPEEIVEKYHEMIKEDLERLNIHFDEFSCTCREFNPDHVDMTQWFFKRLYEAGYIEEREVEQLYCPECERPLPDRYVEGVCPYCGAEGARGDHCEACGRYLEPVQLEEPRCVICGSKPEVRRTMHLFFKLSEFEEDLKKWLESNDNLPKNVRNYAIQWVREGLKDWDIVRDLDWGVPVPLEGYEDKVFYVWFDAPIGYVTFTKQYCDRVGQDWKDYWFSEDTKIVHFIGKDIIVHHALFWPAMLMGVGATLPYTIVAGEYLTLEGEKMSTSRGWVVWVKDFTKLFPADLLRYYLIVVSPLTRDADFSWGDFRDRVNNELVANLGNFVYRTLSFIYRFLDGNVPEAETDQEIVDKIKETHQRVTEHLEKFRFREALTEVLRLSKFGNEYFQEHEPWKLKDEDPERCAEVLRGCARIVKALAVMLAPFLPDSAEKIWQSLGYEDSVHDVDWEEALEDVETKEIPEPEPIFPKVTEEDLEKAKALLPEESGESEGQDDEYVSLEEFNRLDLRVGKIKEAERVEGSDRLIKLRIDIGDRTVTAVAGLYPTYEPEELVGRKVVVLANIQPKEMFGVRSEAMILAVGDEPALLTIDESKREVEPGERIR.

A 'HIGH' region motif is present at residues 11–21; that stretch reads AYTNGPLHIGH. Zn(2+)-binding residues include Cys-146, Cys-149, Cys-159, and Cys-162. The short motif at 332 to 336 is the 'KMSKS' region element; that stretch reads KMSTS. Residue Thr-335 participates in ATP binding. In terms of domain architecture, tRNA-binding spans 567–668; sequence EFNRLDLRVG…REVEPGERIR (102 aa).

This sequence belongs to the class-I aminoacyl-tRNA synthetase family. MetG type 1 subfamily. Homodimer. It depends on Zn(2+) as a cofactor.

The protein localises to the cytoplasm. It catalyses the reaction tRNA(Met) + L-methionine + ATP = L-methionyl-tRNA(Met) + AMP + diphosphate. In terms of biological role, is required not only for elongation of protein synthesis but also for the initiation of all mRNA translation through initiator tRNA(fMet) aminoacylation. The protein is Methionine--tRNA ligase of Methanopyrus kandleri (strain AV19 / DSM 6324 / JCM 9639 / NBRC 100938).